We begin with the raw amino-acid sequence, 270 residues long: Putative carboxymethylenebutenolidase (270 aa).

Residues Cys-147, Asp-204, and His-236 contribute to the active site.

Belongs to the dienelactone hydrolase family.

It catalyses the reaction 2-(5-oxo-2,5-dihydrofuran-2-ylidene)acetate + H2O = 4-oxohex-2-enedioate + H(+). In Salmonella typhi, this protein is Putative carboxymethylenebutenolidase (ysgA).